A 115-amino-acid chain; its full sequence is Ig heavy chain V-III region W3082 (115 aa).

Residues 1-114 (EVKLEESGGG…WGQGTLVTVS (114 aa)) form the Ig-like domain. A disulfide bridge links C22 with C98.

The polypeptide is Ig heavy chain V-III region W3082 (Mus musculus (Mouse)).